A 600-amino-acid chain; its full sequence is Rhesus-like glycoprotein B (600 aa).

Topologically, residues Met1–Ser16 are cytoplasmic. A helical transmembrane segment spans residues Ile17–Trp37. Residues Val38–Tyr73 are Extracellular-facing. N-linked (GlcNAc...) asparagine glycosylation occurs at Asn46. The helical transmembrane segment at Gly74 to Leu94 threads the bilayer. Over Arg95–Leu102 the chain is Cytoplasmic. Residues Gly103 to Phe123 form a helical membrane-spanning segment. Residues Glu124–Thr145 are Extracellular-facing. The chain crosses the membrane as a helical span at residues Val146–Gly166. The Cytoplasmic portion of the chain corresponds to Arg167–Pro170. A helical transmembrane segment spans residues Leu171–Gly191. The Extracellular segment spans residues Glu192–Asp199. Residues Val200 to Phe220 form a helical membrane-spanning segment. At Leu221 to Tyr240 the chain is on the cytoplasmic side. Residues Phe241–Ala261 traverse the membrane as a helical segment. The Extracellular portion of the chain corresponds to Pro262–Thr274. Residues Phe275 to Leu295 form a helical membrane-spanning segment. At Gly296–His303 the chain is on the cytoplasmic side. Residues Val304 to Ile323 form a helical membrane-spanning segment. Residues Asn324 to Pro325 lie on the Extracellular side of the membrane. Residues Gly326–Ile346 traverse the membrane as a helical segment. The Cytoplasmic segment spans residues Ser347–Gly361. A helical membrane pass occupies residues Ile362–Trp382. At Lys383 to Ala411 the chain is on the extracellular side. A helical membrane pass occupies residues Ala412–Leu432. At Lys433–Val600 the chain is on the cytoplasmic side. The segment at Asn471 to Val600 is disordered. A compositionally biased stretch (basic and acidic residues) spans Asn498–Arg510. Low complexity predominate over residues Glu519 to Ser529. Basic residues predominate over residues Arg540–Lys554. A compositionally biased stretch (basic and acidic residues) spans Ser555–Glu566. Over residues Asn571–Asn580 the composition is skewed to low complexity. The segment covering Ala581–Val600 has biased composition (polar residues).

This sequence belongs to the ammonium transporter (TC 2.A.49) family. Rh subfamily.

The protein localises to the membrane. Functionally, may be a carbon dioxide/bicarbonate transporter. The sequence is that of Rhesus-like glycoprotein B (rhgB) from Dictyostelium discoideum (Social amoeba).